The primary structure comprises 777 residues: Subtilisin-like protease SBT1.4 (777 aa).

The signal sequence occupies residues 1–25; the sequence is MAKLSLSSIFFVFPLLLCFFSPSSS. A propeptide spans 26-110 (activation peptide); the sequence is SSDGLESYIV…VIPDQAREIH (85 aa). An Inhibitor I9 domain is found at 32–110; sequence SYIVHVQRSH…VIPDQAREIH (79 aa). The Peptidase S8 domain occupies 115-614; it reads PAFLGFSQNS…AGHVDPNKAL (500 aa). The Charge relay system role is filled by D142. N-linked (GlcNAc...) asparagine glycosylation is present at N198. The segment at 199–223 is disordered; it reads GTKKHAAKESRSPRDTEGHGTHTAS. Over residues 205–218 the composition is skewed to basic and acidic residues; the sequence is AKESRSPRDTEGHG. H217 serves as the catalytic Charge relay system. N232 and N395 each carry an N-linked (GlcNAc...) asparagine glycan. In terms of domain architecture, PA spans 376 to 461; that stretch reads LSLVYSGDCG…VGAKAGDQIR (86 aa). The active-site Charge relay system is S546.

Belongs to the peptidase S8 family.

The protein resides in the secreted. This chain is Subtilisin-like protease SBT1.4, found in Arabidopsis thaliana (Mouse-ear cress).